We begin with the raw amino-acid sequence, 484 residues long: Ribonuclease Y (484 aa).

A helical transmembrane segment spans residues 18 to 38; that stretch reads FFAFLFLIIIAFNLCLFAYLY. The region spanning 166-234 is the KH domain; that stretch reads SPSFLISESD…LTVRNILMND (69 aa). The region spanning 293–385 is the HD domain; the sequence is VLSHSLETAF…TQIADKLSAA (93 aa).

The protein belongs to the RNase Y family.

The protein localises to the cell membrane. Functionally, endoribonuclease that initiates mRNA decay. This Mycoplasma genitalium (strain ATCC 33530 / DSM 19775 / NCTC 10195 / G37) (Mycoplasmoides genitalium) protein is Ribonuclease Y.